A 569-amino-acid polypeptide reads, in one-letter code: Probable diguanylate cyclase DgcQ (569 aa).

A run of 2 helical transmembrane segments spans residues 25–45 and 365–385; these read LGPGHVVNLCFIVVLLFSTLL and IALTLLWALFTTMLLISWYVI. The GGDEF domain occupies 433 to 568; it reads HPFSVIQVDL…GRNRVCASDN (136 aa). Asp441 serves as a coordination point for Mg(2+). Residues Asn449, His454, and Asp458 each coordinate substrate. Glu484 contacts Mg(2+). Glu484 (proton acceptor) is an active-site residue.

As to quaternary structure, homodimer. Mg(2+) is required as a cofactor.

It is found in the cell inner membrane. It carries out the reaction 2 GTP = 3',3'-c-di-GMP + 2 diphosphate. The protein operates within glycan metabolism; bacterial cellulose biosynthesis. Its pathway is purine metabolism; 3',5'-cyclic di-GMP biosynthesis. Functionally, catalyzes the synthesis of cyclic-di-GMP (c-di-GMP) via the condensation of 2 GTP molecules. Cyclic-di-GMP is a second messenger which controls cell surface-associated traits in bacteria. Involved in the regulation of cellulose production. The protein is Probable diguanylate cyclase DgcQ of Shigella sonnei (strain Ss046).